A 313-amino-acid polypeptide reads, in one-letter code: tRNA dimethylallyltransferase (313 aa).

11–18 provides a ligand contact to ATP; that stretch reads GPTAGGKT. Substrate is bound at residue 13–18; that stretch reads TAGGKT. Interaction with substrate tRNA stretches follow at residues 36 to 39, 160 to 164, and 243 to 248; these read DSAL, QRIGR, and RCVGYR.

This sequence belongs to the IPP transferase family. In terms of assembly, monomer. Mg(2+) serves as cofactor.

It catalyses the reaction adenosine(37) in tRNA + dimethylallyl diphosphate = N(6)-dimethylallyladenosine(37) in tRNA + diphosphate. In terms of biological role, catalyzes the transfer of a dimethylallyl group onto the adenine at position 37 in tRNAs that read codons beginning with uridine, leading to the formation of N6-(dimethylallyl)adenosine (i(6)A). This chain is tRNA dimethylallyltransferase, found in Neisseria meningitidis serogroup C / serotype 2a (strain ATCC 700532 / DSM 15464 / FAM18).